Here is a 964-residue protein sequence, read N- to C-terminus: Insulin receptor substrate 1 (964 aa).

The PH domain occupies 8–109 (GMALSGNLKK…WLDKLLVLQR (102 aa)). Positions 122-236 (YDQVWQVVIQ…SAMSAKTESN (115 aa)) constitute an IRS-type PTB domain. The segment at 249–268 (LSHEPMRKRSSSANEASKPI) is disordered. 3 positions are modified to phosphoserine: S286, S287, and S342. At Y410 the chain carries Phosphotyrosine; by INSR. The short motif at 410 to 413 (YIPM) is the YXXM motif 1 element. The interval 527–560 (ASNRSQSSIGKEGSSYGSSANRQKKSTSAPLLSL) is disordered. Residues 528 to 560 (SNRSQSSIGKEGSSYGSSANRQKKSTSAPLLSL) are compositionally biased toward polar residues. A Phosphoserine modification is found at S554. Positions 640-643 (YLEM) match the YXXM motif 2 motif. Residues 698-712 (EKWREQPSRSEEKKS) show a composition bias toward basic and acidic residues. Residues 698-735 (EKWREQPSRSEEKKSNSPLNDNPFSLKPTNVESKSKSH) form a disordered region. Polar residues predominate over residues 713–729 (NSPLNDNPFSLKPTNVE). Phosphotyrosine; by INSR is present on Y907. The interval 921-964 (AKYLKRGSRESPPVSACPEDGNTYARIDFDQSDSSSSSSNIFNT) is disordered. Phosphoserine is present on residues S928 and S931. Y944 bears the Phosphotyrosine; by INSR mark. The segment covering 952-964 (SDSSSSSSNIFNT) has biased composition (low complexity).

In terms of assembly, bindings to phosphatidylinositol 3-kinase and SHP2.

Activates phosphatidylinositol 3-kinase when bound to the regulatory p85 subunit. May mediate the control of various cellular processes by insulin-like peptides. When phosphorylated by the insulin receptor binds specifically to various cellular proteins containing SH2 domains. Involved in control of cell proliferation, cell size, and body and organ growth throughout development. Also has a role in a signaling pathway controlling the physiological response required to endure periods of low nutrient conditions. Insulin/insulin-like growth factor (IGF) signaling pathway has a role in regulating aging and is necessary in the ovary for vitellogenic maturation. This Drosophila sechellia (Fruit fly) protein is Insulin receptor substrate 1.